Consider the following 207-residue polypeptide: Probable molybdenum cofactor guanylyltransferase (207 aa).

Residues 9–11 (LAG), Lys-21, and Asp-97 contribute to the GTP site. Residue Asp-97 participates in Mg(2+) binding.

Belongs to the MobA family. Requires Mg(2+) as cofactor.

Its subcellular location is the cytoplasm. The enzyme catalyses Mo-molybdopterin + GTP + H(+) = Mo-molybdopterin guanine dinucleotide + diphosphate. Functionally, transfers a GMP moiety from GTP to Mo-molybdopterin (Mo-MPT) cofactor (Moco or molybdenum cofactor) to form Mo-molybdopterin guanine dinucleotide (Mo-MGD) cofactor. In Trichormus variabilis (strain ATCC 29413 / PCC 7937) (Anabaena variabilis), this protein is Probable molybdenum cofactor guanylyltransferase.